The chain runs to 218 residues: Thiopurine S-methyltransferase (218 aa).

S-adenosyl-L-methionine-binding residues include W10, L45, E66, and R123.

Belongs to the class I-like SAM-binding methyltransferase superfamily. TPMT family.

It localises to the cytoplasm. It catalyses the reaction S-adenosyl-L-methionine + a thiopurine = S-adenosyl-L-homocysteine + a thiopurine S-methylether.. The sequence is that of Thiopurine S-methyltransferase from Pseudomonas aeruginosa (strain ATCC 15692 / DSM 22644 / CIP 104116 / JCM 14847 / LMG 12228 / 1C / PRS 101 / PAO1).